Reading from the N-terminus, the 142-residue chain is Large ribosomal subunit protein uL11 (142 aa).

This sequence belongs to the universal ribosomal protein uL11 family. In terms of assembly, part of the ribosomal stalk of the 50S ribosomal subunit. Interacts with L10 and the large rRNA to form the base of the stalk. L10 forms an elongated spine to which L12 dimers bind in a sequential fashion forming a multimeric L10(L12)X complex. In terms of processing, one or more lysine residues are methylated.

Functionally, forms part of the ribosomal stalk which helps the ribosome interact with GTP-bound translation factors. This Brucella anthropi (strain ATCC 49188 / DSM 6882 / CCUG 24695 / JCM 21032 / LMG 3331 / NBRC 15819 / NCTC 12168 / Alc 37) (Ochrobactrum anthropi) protein is Large ribosomal subunit protein uL11.